A 254-amino-acid polypeptide reads, in one-letter code: 3-deoxy-manno-octulosonate cytidylyltransferase (254 aa).

It belongs to the KdsB family.

The protein resides in the cytoplasm. It catalyses the reaction 3-deoxy-alpha-D-manno-oct-2-ulosonate + CTP = CMP-3-deoxy-beta-D-manno-octulosonate + diphosphate. Its pathway is nucleotide-sugar biosynthesis; CMP-3-deoxy-D-manno-octulosonate biosynthesis; CMP-3-deoxy-D-manno-octulosonate from 3-deoxy-D-manno-octulosonate and CTP: step 1/1. It participates in bacterial outer membrane biogenesis; lipopolysaccharide biosynthesis. In terms of biological role, activates KDO (a required 8-carbon sugar) for incorporation into bacterial lipopolysaccharide in Gram-negative bacteria. The sequence is that of 3-deoxy-manno-octulosonate cytidylyltransferase from Pseudomonas syringae pv. syringae (strain B728a).